The primary structure comprises 100 residues: ATP synthase subunit c (100 aa).

A run of 2 helical transmembrane segments spans residues 30-50 (LLYL…GVGM) and 80-100 (AFIE…LFVV).

It belongs to the ATPase C chain family. In terms of assembly, F-type ATPases have 2 components, F(1) - the catalytic core - and F(0) - the membrane proton channel. F(1) has five subunits: alpha(3), beta(3), gamma(1), delta(1), epsilon(1). F(0) has three main subunits: a(1), b(2) and c(10-14). The alpha and beta chains form an alternating ring which encloses part of the gamma chain. F(1) is attached to F(0) by a central stalk formed by the gamma and epsilon chains, while a peripheral stalk is formed by the delta and b chains.

Its subcellular location is the cell inner membrane. In terms of biological role, f(1)F(0) ATP synthase produces ATP from ADP in the presence of a proton or sodium gradient. F-type ATPases consist of two structural domains, F(1) containing the extramembraneous catalytic core and F(0) containing the membrane proton channel, linked together by a central stalk and a peripheral stalk. During catalysis, ATP synthesis in the catalytic domain of F(1) is coupled via a rotary mechanism of the central stalk subunits to proton translocation. Functionally, key component of the F(0) channel; it plays a direct role in translocation across the membrane. A homomeric c-ring of between 10-14 subunits forms the central stalk rotor element with the F(1) delta and epsilon subunits. The chain is ATP synthase subunit c from Aquifex aeolicus (strain VF5).